Reading from the N-terminus, the 209-residue chain is Ribonuclease HII (209 aa).

The RNase H type-2 domain occupies 5–202; it reads SMTLGIDEAG…KNRILNPKLL (198 aa). Positions 11, 12, and 108 each coordinate a divalent metal cation.

This sequence belongs to the RNase HII family. Mn(2+) is required as a cofactor. Mg(2+) serves as cofactor.

It localises to the cytoplasm. The enzyme catalyses Endonucleolytic cleavage to 5'-phosphomonoester.. Its function is as follows. Endonuclease that specifically degrades the RNA of RNA-DNA hybrids. This chain is Ribonuclease HII (rnhB), found in Helicobacter pylori (strain J99 / ATCC 700824) (Campylobacter pylori J99).